A 205-amino-acid chain; its full sequence is Large ribosomal subunit protein uL3 (205 aa).

Belongs to the universal ribosomal protein uL3 family. In terms of assembly, part of the 50S ribosomal subunit. Forms a cluster with proteins L14 and L19.

In terms of biological role, one of the primary rRNA binding proteins, it binds directly near the 3'-end of the 23S rRNA, where it nucleates assembly of the 50S subunit. The polypeptide is Large ribosomal subunit protein uL3 (Flavobacterium johnsoniae (strain ATCC 17061 / DSM 2064 / JCM 8514 / BCRC 14874 / CCUG 350202 / NBRC 14942 / NCIMB 11054 / UW101) (Cytophaga johnsonae)).